Here is a 191-residue protein sequence, read N- to C-terminus: Outer membrane lipoprotein DolP (191 aa).

The signal sequence occupies residues 1-18; that stretch reads MKAFSPLAVLISALLLQG. Residue C19 is the site of N-palmitoyl cysteine attachment. A lipid anchor (S-diacylglycerol cysteine) is attached at C19. BON domains follow at residues 46–115 and 124–191; these read DDGT…RQGQ and NDTW…TYIK.

It belongs to the lipoprotein DolP family.

Its subcellular location is the cell outer membrane. Its function is as follows. Plays an important role in maintaining outer membrane integrity. Contributes to virulence. The polypeptide is Outer membrane lipoprotein DolP (Salmonella typhimurium (strain LT2 / SGSC1412 / ATCC 700720)).